A 309-amino-acid polypeptide reads, in one-letter code: Methionyl-tRNA formyltransferase (309 aa).

110–113 (SLLP) serves as a coordination point for (6S)-5,6,7,8-tetrahydrofolate. The disordered stretch occupies residues 289–309 (KRMAATDWARGSRIEQGERLK). The span at 298–309 (RGSRIEQGERLK) shows a compositional bias: basic and acidic residues.

This sequence belongs to the Fmt family.

The catalysed reaction is L-methionyl-tRNA(fMet) + (6R)-10-formyltetrahydrofolate = N-formyl-L-methionyl-tRNA(fMet) + (6S)-5,6,7,8-tetrahydrofolate + H(+). Attaches a formyl group to the free amino group of methionyl-tRNA(fMet). The formyl group appears to play a dual role in the initiator identity of N-formylmethionyl-tRNA by promoting its recognition by IF2 and preventing the misappropriation of this tRNA by the elongation apparatus. The chain is Methionyl-tRNA formyltransferase from Saccharopolyspora erythraea (strain ATCC 11635 / DSM 40517 / JCM 4748 / NBRC 13426 / NCIMB 8594 / NRRL 2338).